Here is a 586-residue protein sequence, read N- to C-terminus: Thioredoxin domain-containing protein 3 (586 aa).

A Thioredoxin domain is found at 10-116; the sequence is LQSVVNSQNL…NRKVITLIDE (107 aa). A disulfide bridge links Cys39 with Cys42. NDK stretches follow at residues 157–254, 312–452, and 453–586; these read MAII…VLEE, VQTT…STLA, and LIKP…NPEN.

This sequence in the C-terminal section; belongs to the NDK family. Monomer. Testis-specific. Expressed mainly in round spermatids.

The protein resides in the cytoplasm. Probably required during the final stages of sperm tail maturation in the testis and/or epididymis, where extensive disulfide bonding of fibrous sheath (FS) proteins occurs. In vitro, it has neither nucleoside diphosphate kinase (NDPK) activity nor reducing activity on disulfide bonds. Exhibits a 3'-5' exonuclease activity with a preference for single-stranded DNA, suggesting roles in DNA proofreading and repair. The polypeptide is Thioredoxin domain-containing protein 3 (Nme8) (Mus musculus (Mouse)).